The following is a 137-amino-acid chain: Global transcriptional regulator Spx (137 aa).

A disulfide bridge links C10 with C13.

It belongs to the ArsC family. Spx subfamily. As to quaternary structure, interacts with the C-terminal domain of the alpha subunit of the RNAP.

The protein resides in the cytoplasm. In terms of biological role, global transcriptional regulator that plays a key role in stress response and exerts either positive or negative regulation of genes. Acts by interacting with the C-terminal domain of the alpha subunit of the RNA polymerase (RNAP). This interaction can enhance binding of RNAP to the promoter region of target genes and stimulate their transcription, or block interaction of RNAP with activator. In Streptococcus agalactiae serotype III (strain NEM316), this protein is Global transcriptional regulator Spx.